Here is a 247-residue protein sequence, read N- to C-terminus: UPF0309 protein Teth39_1980 (247 aa).

The SIS domain maps to 31–213; sequence IANSLLKEED…EAEIVFIMIK (183 aa).

Belongs to the UPF0309 family.

The polypeptide is UPF0309 protein Teth39_1980 (Thermoanaerobacter pseudethanolicus (strain ATCC 33223 / 39E) (Clostridium thermohydrosulfuricum)).